The primary structure comprises 378 residues: Probable protein phosphatase 2C 55 (378 aa).

Disordered stretches follow at residues 1-59 (MRRH…ASKG) and 79-115 (EGEA…GVGC). Residues 7-26 (LGLLRRAAASSTSAASSRAG) show a composition bias toward low complexity. The span at 92–104 (GGRRGRNSKRQPP) shows a compositional bias: basic residues. Residues 122-369 (SWGYSSFQGR…DNVTCIVLQF (248 aa)) enclose the PPM-type phosphatase domain. Mn(2+) is bound by residues Asp158, Gly159, Asp321, and Asp360.

Belongs to the PP2C family. It depends on Mg(2+) as a cofactor. Requires Mn(2+) as cofactor.

The catalysed reaction is O-phospho-L-seryl-[protein] + H2O = L-seryl-[protein] + phosphate. It carries out the reaction O-phospho-L-threonyl-[protein] + H2O = L-threonyl-[protein] + phosphate. This Oryza sativa subsp. japonica (Rice) protein is Probable protein phosphatase 2C 55.